Reading from the N-terminus, the 215-residue chain is Ribosomal RNA small subunit methyltransferase G (215 aa).

S-adenosyl-L-methionine is bound by residues Gly77, Phe82, 130-131 (IE), and Arg146.

It belongs to the methyltransferase superfamily. RNA methyltransferase RsmG family.

Its subcellular location is the cytoplasm. It carries out the reaction guanosine(527) in 16S rRNA + S-adenosyl-L-methionine = N(7)-methylguanosine(527) in 16S rRNA + S-adenosyl-L-homocysteine. In terms of biological role, specifically methylates the N7 position of guanine in position 527 of 16S rRNA. The sequence is that of Ribosomal RNA small subunit methyltransferase G from Bartonella quintana (strain Toulouse) (Rochalimaea quintana).